We begin with the raw amino-acid sequence, 96 residues long: Neurotoxin beta-KTx 31.1 (96 aa).

An N-terminal signal peptide occupies residues 1-21 (MQAKRTILLLLLLGMVALSSC). The propeptide occupies 22 to 29 (GLREKHVQ). One can recognise a BetaSPN-type CS-alpha/beta domain in the interval 56–93 (QYGCPIIKDYCSFHCNDLEKHEGYCHGTKCKCNIPNQY). Intrachain disulfides connect Cys59/Cys80, Cys66/Cys85, and Cys70/Cys87.

It belongs to the long chain scorpion toxin family. Class 1 subfamily. As to expression, expressed by the venom gland.

It localises to the secreted. Functionally, inhibits voltage-gated potassium channel. The sequence is that of Neurotoxin beta-KTx 31.1 from Lychas mucronatus (Chinese swimming scorpion).